We begin with the raw amino-acid sequence, 180 residues long: DNA-directed RNA polymerase subunit omega (180 aa).

Residues 100–180 form a disordered region; the sequence is ISKSGTPILP…NSDDSETTNS (81 aa). 2 stretches are compositionally biased toward acidic residues: residues 137-151 and 159-180; these read EVDVDAELEVGDEET and AEAETEAETTEVNSDDSETTNS.

It belongs to the RNA polymerase subunit omega family. In terms of assembly, the RNAP catalytic core consists of 2 alpha, 1 beta, 1 beta' and 1 omega subunit. When a sigma factor is associated with the core the holoenzyme is formed, which can initiate transcription.

The catalysed reaction is RNA(n) + a ribonucleoside 5'-triphosphate = RNA(n+1) + diphosphate. Promotes RNA polymerase assembly. Latches the N- and C-terminal regions of the beta' subunit thereby facilitating its interaction with the beta and alpha subunits. The protein is DNA-directed RNA polymerase subunit omega of Pelagibacter ubique (strain HTCC1062).